A 252-amino-acid chain; its full sequence is Imidazole glycerol phosphate synthase subunit HisF (252 aa).

Residues Asp-12 and Asp-131 contribute to the active site.

This sequence belongs to the HisA/HisF family. Heterodimer of HisH and HisF.

Its subcellular location is the cytoplasm. The enzyme catalyses 5-[(5-phospho-1-deoxy-D-ribulos-1-ylimino)methylamino]-1-(5-phospho-beta-D-ribosyl)imidazole-4-carboxamide + L-glutamine = D-erythro-1-(imidazol-4-yl)glycerol 3-phosphate + 5-amino-1-(5-phospho-beta-D-ribosyl)imidazole-4-carboxamide + L-glutamate + H(+). Its pathway is amino-acid biosynthesis; L-histidine biosynthesis; L-histidine from 5-phospho-alpha-D-ribose 1-diphosphate: step 5/9. Functionally, IGPS catalyzes the conversion of PRFAR and glutamine to IGP, AICAR and glutamate. The HisF subunit catalyzes the cyclization activity that produces IGP and AICAR from PRFAR using the ammonia provided by the HisH subunit. This Thermus thermophilus (strain ATCC BAA-163 / DSM 7039 / HB27) protein is Imidazole glycerol phosphate synthase subunit HisF.